The chain runs to 1171 residues: Structural maintenance of chromosomes protein 2-2 (1171 aa).

The Zinc-hook domain maps to 2–1158 (HIKEICLEGF…DVLFRTKFVD (1157 aa)). Residue 32 to 39 (GLNGSGKS) coordinates ATP. A coiled-coil region spans residues 172-510 (RMYENKKEAA…LANVQFTYRD (339 aa)). The SMC hinge domain occupies 518-635 (SKVKGVVAKL…KTTDAAKEVA (118 aa)). Residues 674 to 1026 (HDLAEAETKF…LDEKKKETLK (353 aa)) adopt a coiled-coil conformation.

This sequence belongs to the SMC family. SMC2 subfamily. Forms a heterodimer with SMC4. Component of the condensin complex, which contains the SMC2 and SMC4 heterodimer, and three non SMC subunits that probably regulate the complex: CAPH, CAPD2 and CAPG. As to expression, highly expressed in roots and young floral buds.

The protein resides in the nucleus. Its function is as follows. Central component of the condensin complex, a complex required for conversion of interphase chromatin into mitotic-like condense chromosomes. The condensin complex probably introduces positive supercoils into relaxed DNA in the presence of type I topoisomerases and converts nicked DNA into positive knotted forms in the presence of type II topoisomerases. Also involved in chromosome segregation in meiosis. This is Structural maintenance of chromosomes protein 2-2 (SMC2-2) from Arabidopsis thaliana (Mouse-ear cress).